The chain runs to 530 residues: Apolipoprotein N-acyltransferase (530 aa).

6 consecutive transmembrane segments (helical) span residues 19–39 (LIAGLAAALAHPPFGVLPGLL), 65–85 (WLAGVGYFGLGTWWVGEAFLV), 96–116 (FAVTGMAAGLALFWGLAALLY), 128–148 (LTFAGAFAALEWMRGHVLTGF), 169–189 (LVGAYGLTWITLAIAGAPAVW), and 197–217 (AATGLAVASLIGLYGYGAIAL). The 254-residue stretch at 232 to 485 (VQADIKQDLK…SGVIDAQIPG (254 aa)) folds into the CN hydrolase domain. E274 functions as the Proton acceptor in the catalytic mechanism. K343 is an active-site residue. C396 functions as the Nucleophile in the catalytic mechanism.

This sequence belongs to the CN hydrolase family. Apolipoprotein N-acyltransferase subfamily.

It is found in the cell inner membrane. It catalyses the reaction N-terminal S-1,2-diacyl-sn-glyceryl-L-cysteinyl-[lipoprotein] + a glycerophospholipid = N-acyl-S-1,2-diacyl-sn-glyceryl-L-cysteinyl-[lipoprotein] + a 2-acyl-sn-glycero-3-phospholipid + H(+). Its pathway is protein modification; lipoprotein biosynthesis (N-acyl transfer). Catalyzes the phospholipid dependent N-acylation of the N-terminal cysteine of apolipoprotein, the last step in lipoprotein maturation. The polypeptide is Apolipoprotein N-acyltransferase (Caulobacter vibrioides (strain ATCC 19089 / CIP 103742 / CB 15) (Caulobacter crescentus)).